Reading from the N-terminus, the 338-residue chain is DNA-directed RNA polymerase subunit alpha (338 aa).

The segment at 1–226 is alpha N-terminal domain (alpha-NTD); the sequence is MLIAQRPSLT…ELFGLARELN (226 aa). The tract at residues 243–338 is alpha C-terminal domain (alpha-CTD); it reads LAADLVMPIE…DAGFLETEHY (96 aa).

Belongs to the RNA polymerase alpha chain family. In terms of assembly, homodimer. The RNAP catalytic core consists of 2 alpha, 1 beta, 1 beta' and 1 omega subunit. When a sigma factor is associated with the core the holoenzyme is formed, which can initiate transcription.

It catalyses the reaction RNA(n) + a ribonucleoside 5'-triphosphate = RNA(n+1) + diphosphate. In terms of biological role, DNA-dependent RNA polymerase catalyzes the transcription of DNA into RNA using the four ribonucleoside triphosphates as substrates. In Streptomyces avermitilis (strain ATCC 31267 / DSM 46492 / JCM 5070 / NBRC 14893 / NCIMB 12804 / NRRL 8165 / MA-4680), this protein is DNA-directed RNA polymerase subunit alpha.